The following is a 445-amino-acid chain: UDP-N-acetylmuramoylalanine--D-glutamate ligase (445 aa).

126–132 (GTSGKTT) is an ATP binding site.

Belongs to the MurCDEF family.

The protein localises to the cytoplasm. The enzyme catalyses UDP-N-acetyl-alpha-D-muramoyl-L-alanine + D-glutamate + ATP = UDP-N-acetyl-alpha-D-muramoyl-L-alanyl-D-glutamate + ADP + phosphate + H(+). The protein operates within cell wall biogenesis; peptidoglycan biosynthesis. In terms of biological role, cell wall formation. Catalyzes the addition of glutamate to the nucleotide precursor UDP-N-acetylmuramoyl-L-alanine (UMA). This is UDP-N-acetylmuramoylalanine--D-glutamate ligase from Nitratidesulfovibrio vulgaris (strain DSM 19637 / Miyazaki F) (Desulfovibrio vulgaris).